The sequence spans 571 residues: Alpha-1D adrenergic receptor (571 aa).

Over 1–94 the chain is Extracellular; it reads MTFRDLLSVN…AVGGLVVSAQ (94 aa). The disordered stretch occupies residues 13-75; it reads GSRSDGSAGG…SSAGEPGAAG (63 aa). A compositionally biased stretch (gly residues) spans 19–34; the sequence is SAGGASAGGSGGGSGG. Positions 35–47 are enriched in low complexity; the sequence is AAASEGRAVDGVP. A compositionally biased stretch (gly residues) spans 48-57; the sequence is GTAGSGGVVG. Asn64 and Asn81 each carry an N-linked (GlcNAc...) asparagine glycan. The helical transmembrane segment at 95-120 threads the bilayer; it reads GVGVGVFLAAFILMAVAGNLLVILSV. At 121-132 the chain is on the cytoplasmic side; that stretch reads ACNRHLQTVTNY. A helical transmembrane segment spans residues 133-158; it reads FIVNLAVADLLLSATVLPFSATMEVL. Over 159-168 the chain is Extracellular; that stretch reads GFWAFGRAFC. A helical membrane pass occupies residues 169 to 191; the sequence is DVWAAVDVLCCTASILSLCTISV. Residues 192-212 are Cytoplasmic-facing; it reads DRYVGVRHSLKYPSIMTERKA. Residues 213 to 237 form a helical membrane-spanning segment; the sequence is AAILALLWAVAIVVSVGPLLGWKEP. The Extracellular portion of the chain corresponds to 238–250; that stretch reads VPPDERFCGITEE. Residues 251 to 274 traverse the membrane as a helical segment; it reads AGYAVFSSLCSFYLPMAVIVVMYC. At 275 to 348 the chain is on the cytoplasmic side; the sequence is RVYVVARSTT…KFSREKKAAK (74 aa). Residues 349–373 form a helical membrane-spanning segment; that stretch reads TLAIVVGVFVLCWFPFFFVLPLGSL. Residues 374–380 lie on the Extracellular side of the membrane; it reads FPQLKPS. A helical membrane pass occupies residues 381-405; that stretch reads EGVFKVIFWLGYFNSCVNPLIYPCS. The Cytoplasmic segment spans residues 406–571; sequence SREFKRAFLR…DYSHLRETDI (166 aa). Cys419 is lipidated: S-palmitoyl cysteine. The disordered stretch occupies residues 465 to 487; that stretch reads LPAPEATDTPSAPEAQAPVVGRR.

It belongs to the G-protein coupled receptor 1 family. Adrenergic receptor subfamily. ADRA1D sub-subfamily. Interacts with FLNA (via filamin repeat 21); increases PKA-mediated phosphorylation of FLNA. Post-translationally, palmitoylated. Palmitoylation by ZDHHC21 may increase the expression of the receptor and regulate downstream signaling.

The protein localises to the cell membrane. This alpha-adrenergic receptor mediates its effect through the influx of extracellular calcium. This is Alpha-1D adrenergic receptor (ADRA1D) from Sus scrofa (Pig).